The sequence spans 141 residues: Hemoglobin subunit alpha-1/2 (141 aa).

The region spanning valine 1–arginine 141 is the Globin domain. Serine 3 bears the Phosphoserine mark. N6-succinyllysine is present on lysine 7. Position 8 is a phosphothreonine (threonine 8). Lysine 11 is subject to N6-succinyllysine. N6-acetyllysine; alternate is present on lysine 16. Lysine 16 carries the N6-succinyllysine; alternate modification. Tyrosine 24 bears the Phosphotyrosine mark. Residue serine 35 is modified to Phosphoserine. Lysine 40 is subject to N6-succinyllysine. Phosphoserine is present on serine 49. Histidine 58 lines the O2 pocket. Histidine 87 is a heme b binding site. Serine 102 bears the Phosphoserine mark. Phosphothreonine is present on threonine 108. Serine 124 bears the Phosphoserine mark. Threonine 134 and threonine 137 each carry phosphothreonine. The residue at position 138 (serine 138) is a Phosphoserine.

This sequence belongs to the globin family. As to quaternary structure, heterotetramer of two alpha chains and two beta chains. Red blood cells.

Involved in oxygen transport from the lung to the various peripheral tissues. In Mustela putorius (European polecat), this protein is Hemoglobin subunit alpha-1/2.